Here is a 576-residue protein sequence, read N- to C-terminus: Arginine--tRNA ligase (576 aa).

A 'HIGH' region motif is present at residues 122 to 132; the sequence is PNVAKQMHVGH.

It belongs to the class-I aminoacyl-tRNA synthetase family. In terms of assembly, monomer.

Its subcellular location is the cytoplasm. The catalysed reaction is tRNA(Arg) + L-arginine + ATP = L-arginyl-tRNA(Arg) + AMP + diphosphate. The chain is Arginine--tRNA ligase from Yersinia pseudotuberculosis serotype I (strain IP32953).